A 143-amino-acid chain; its full sequence is Transcriptional regulator MraZ (143 aa).

2 SpoVT-AbrB domains span residues 5–47 (EYSH…PQKE) and 76–119 (AAEC…SQEL).

The protein belongs to the MraZ family. In terms of assembly, forms oligomers.

The protein resides in the cytoplasm. It is found in the nucleoid. The chain is Transcriptional regulator MraZ from Carboxydothermus hydrogenoformans (strain ATCC BAA-161 / DSM 6008 / Z-2901).